The sequence spans 496 residues: Tyrosine-protein kinase Srms (496 aa).

An SH3 domain is found at 55–116 (PRARLFRALY…PVTYLAKATP (62 aa)). Positions 124-216 (WYFSGISRAQ…LIQNPLLQPC (93 aa)) constitute an SH2 domain. In terms of domain architecture, Protein kinase spans 234 to 495 (FVLRRKLGEG…AINRRLHLGL (262 aa)). ATP contacts are provided by residues 240–248 (LGEGFFGEV) and lysine 262. Catalysis depends on aspartate 354, which acts as the Proton acceptor. A Phosphotyrosine; by autocatalysis modification is found at tyrosine 384.

This sequence belongs to the protein kinase superfamily. Tyr protein kinase family. SRC subfamily. Interacts (via the SH2 and SH3 domains) with DOK1. Interacts with KHDRBS1/SAM68 and VIM. Higher expression in liver, lung, thymus and skin than in brain, kidney, heart and spleen. In skin, highly expressed in keratinocytes. Abundant in lung, liver, spleen, kidney and testis and is also detected in the cerebrum.

It localises to the cytoplasm. The enzyme catalyses L-tyrosyl-[protein] + ATP = O-phospho-L-tyrosyl-[protein] + ADP + H(+). Its function is as follows. Non-receptor tyrosine-protein kinase which phosphorylates DOK1 on tyrosine residues. Also phosphorylates KHDRBS1/SAM68 and VIM on tyrosine residues. Phosphorylation of KHDRBS1 is EGF-dependent. Phosphorylates OTUB1, promoting deubiquitination of RPTOR. The sequence is that of Tyrosine-protein kinase Srms (Srms) from Mus musculus (Mouse).